Here is a 729-residue protein sequence, read N- to C-terminus: Denticleless protein homolog (729 aa).

Position 1 is an N-acetylmethionine (M1). WD repeat units follow at residues 47–89 (GVPV…SKKT), 96–135 (AHWN…LMGT), and 138–178 (GHQC…KDGF). A DDB1-binding motif motif is present at residues 168–171 (WDTR). A compositionally biased stretch (polar residues) spans 189–198 (HNTADKQTPS). The tract at residues 189–212 (HNTADKQTPSKPKKKQNSKGLAPA) is disordered. The residue at position 196 (T196) is a Phosphothreonine. Positions 197-203 (PSKPKKK) match the Nuclear localization signal motif. WD repeat units follow at residues 214–253 (DSQQ…TAYR), 269–308 (TRKL…TSPV), 313–354 (GHQN…HPPT), and 358–398 (GHSQ…EEKP). The DDB1-binding motif motif lies at 243–246 (WDLR). Residues S409 and S425 each carry the phosphoserine modification. 2 disordered regions span residues 416-445 (KACP…SSPS) and 460-491 (PSST…VSPK). A compositionally biased stretch (low complexity) spans 427-445 (STPAKAPRAKSSPSISSPS). Polar residues predominate over residues 460-475 (PSSTPTFSVKTTPATT). T463 carries the phosphothreonine; by CDK1 and CDK2 modification. Residues 476 to 491 (RSSVSRRGSISSVSPK) show a composition bias toward low complexity. Residues S484, S489, S494, and S511 each carry the phosphoserine modification. Residues 504–546 (VTRTPSSSPPVTPPASETKISSPRKALIPVSQKSSQADACSES) are disordered. Phosphothreonine is present on T515. S556 carries the post-translational modification Phosphoserine. Over residues 596–607 (VLSQDSEGPTKS) the composition is skewed to polar residues. The tract at residues 596 to 705 (VLSQDSEGPT…GPVTITPSSM (110 aa)) is disordered. Composition is skewed to low complexity over residues 630–645 (EGCG…CGEG) and 674–688 (SSPR…SSRR). A phosphoserine mark is found at S675 and S678. A phosphothreonine mark is found at T683 and T701.

Belongs to the WD repeat cdt2 family. As to quaternary structure, component of the DCX(DTL) E3 ubiquitin ligase complex (also called CRL4(CDT2)), at least composed of CUL4 (CUL4A or CUL4B), DDB1, DTL/CDT2 and RBX1. Interacts with CDKN1A and DDB1. Interacts with FBXO11; SCF(FBXWO11) controls DTL stability but DCX(DTL) does not control FBXO11 stability. Interacts with CRY1. Post-translationally, ubiquitinated by the anaphase promoting complex/cyclosome (APC/C). Autoubiquitinated through 'Lys-48'-polyubiquitin chains in a PCNA-independent reaction, allowing proteasomal turnover. Polyubiquitinated by SCF(FBXO11) when not phosphorylated, leading to its degradation. A tight regulation of the polyubiquitination by SCF(FBXO11) is involved in the control of different processes such as TGF-beta signaling, cell cycle progression and exit. Phosphorylated at Thr-463 by CDK1/Cyclin B and CDK2/Cycnlin A but not by CDK2/Cyclin E, MAPK1 or PLK1. Phosphorylation at Thr-463 inhibits the interaction with FBXO11 and decreases upon cell cycle exit induced by TGF-beta or serum starvation.

Its subcellular location is the nucleus. It localises to the nucleus membrane. The protein resides in the cytoplasm. It is found in the cytoskeleton. The protein localises to the microtubule organizing center. Its subcellular location is the centrosome. It localises to the chromosome. It participates in protein modification; protein ubiquitination. Its function is as follows. Substrate-specific adapter of a DCX (DDB1-CUL4-X-box) E3 ubiquitin-protein ligase complex required for cell cycle control, DNA damage response and translesion DNA synthesis. The DCX(DTL) complex, also named CRL4(CDT2) complex, mediates the polyubiquitination and subsequent degradation of CDT1, CDKN1A/p21(CIP1), FBH1, KMT5A and SDE2. CDT1 degradation in response to DNA damage is necessary to ensure proper cell cycle regulation of DNA replication. CDKN1A/p21(CIP1) degradation during S phase or following UV irradiation is essential to control replication licensing. KMT5A degradation is also important for a proper regulation of mechanisms such as TGF-beta signaling, cell cycle progression, DNA repair and cell migration. Most substrates require their interaction with PCNA for their polyubiquitination: substrates interact with PCNA via their PIP-box, and those containing the 'K+4' motif in the PIP box, recruit the DCX(DTL) complex, leading to their degradation. In undamaged proliferating cells, the DCX(DTL) complex also promotes the 'Lys-164' monoubiquitination of PCNA, thereby being involved in PCNA-dependent translesion DNA synthesis. The DDB1-CUL4A-DTL E3 ligase complex regulates the circadian clock function by mediating the ubiquitination and degradation of CRY1. This Mus musculus (Mouse) protein is Denticleless protein homolog (Dtl).